Consider the following 400-residue polypeptide: Integumentary mucin A.1 (400 aa).

The N-terminal stretch at 1 to 20 (MKHIILCIHFLLMVVGLGQA) is a signal peptide. P-type domains are found at residues 21–64 (QDCS…FYNA) and 72–115 (LECS…YART). Intrachain disulfides connect C23–C49, C33–C48, and C43–C60. A glycan (N-linked (GlcNAc...) asparagine) is linked at N63. 3 disulfide bridges follow: C74–C100, C84–C99, and C94–C111. Low complexity-rich tracts occupy residues 122-264 (PDTT…DTTP) and 272-299 (ETTTETTTETTTETTTETTTETTTETTT). The tract at residues 122–302 (PDTTTASTTA…TTTETTTAPP (181 aa)) is disordered. Repeat copies occupy residues 127–135 (ASTTAETTT), 136–144 (VPTTPETTT), 145–153 (VPTTPETTT), 154–162 (VPTTPETTT), 163–171 (VPTTPETTT), 172–180 (VPTTPETTT), 181–189 (VPTTPETTT), 190–198 (VPTTPETTT), 199–207 (VPTTPETTT), 208–216 (VPTTPETTT), 217–225 (VPTTPETTT), 226–234 (VPTTPETTT), 235–243 (ASTTAETTT), and 244–252 (VPTTPETTT). The segment at 127-261 (ASTTAETTTV…TEPTTTPTTD (135 aa)) is 15 X 9 AA approximate tandem repeats of [AV]-[SP]-T-T-[AP]-E-T-T-T. One copy of the 1-15; approximate repeat lies at 253 to 261 (EPTTTPTTD). 7 repeat units span residues 272–275 (ETTT), 276–279 (ETTT), 280–283 (ETTT), 284–287 (ETTT), 288–291 (ETTT), 292–295 (ETTT), and 296–299 (ETTT). The 7 X 4 AA repeats of E-T-T-T stretch occupies residues 272–299 (ETTTETTTETTTETTTETTTETTTETTT). P-type domains are found at residues 298–343 (TTAP…FYTE) and 351–394 (AECT…FEKA). Cystine bridges form between C312/C327, C322/C339, C353/C379, C363/C378, and C373/C390.

Post-translationally, extensively O-glycosylated. Consist of about 70% carbohydrate and 30% protein. Expressed and stored exclusively in mature mucous glands of the skin.

The protein resides in the secreted. Could be involved in defense against microbial infections. Protects the epithelia from external environment. This chain is Integumentary mucin A.1, found in Xenopus laevis (African clawed frog).